We begin with the raw amino-acid sequence, 295 residues long: Protoheme IX farnesyltransferase (295 aa).

Helical transmembrane passes span 9–29 (ITKP…FFLA), 36–56 (FGVF…GCVF), 80–100 (LVSL…GVGL), 108–128 (LAAL…SLYL), 135–155 (GTLV…CAVS), 163–183 (LTLL…IAIF), 209–229 (IMLY…GGYA), 230–250 (GLNY…MAWK), and 265–285 (FVFS…DFQV).

It belongs to the UbiA prenyltransferase family. Protoheme IX farnesyltransferase subfamily.

The protein resides in the cell inner membrane. The enzyme catalyses heme b + (2E,6E)-farnesyl diphosphate + H2O = Fe(II)-heme o + diphosphate. Its pathway is porphyrin-containing compound metabolism; heme O biosynthesis; heme O from protoheme: step 1/1. In terms of biological role, converts heme B (protoheme IX) to heme O by substitution of the vinyl group on carbon 2 of heme B porphyrin ring with a hydroxyethyl farnesyl side group. In Pseudomonas syringae pv. syringae (strain B728a), this protein is Protoheme IX farnesyltransferase.